Here is a 448-residue protein sequence, read N- to C-terminus: Tubby-like F-box protein 3 (448 aa).

One can recognise an F-box domain in the interval 56–102 (ESRWASLPPELLREVIRRLEADESTWPSRRNVVCFAAVCRTWREMCK). Pro residues predominate over residues 387-403 (PSPPPAGAPTPSQPGPA). Residues 387–406 (PSPPPAGAPTPSQPGPADPE) are disordered.

Belongs to the TUB family. In terms of tissue distribution, expressed in roots, leaves, flowers and seeds.

This Oryza sativa subsp. japonica (Rice) protein is Tubby-like F-box protein 3 (TULP3).